Consider the following 660-residue polypeptide: Genome-linked protein precursor (660 aa).

A signal peptide spans 1–25 (MALLGIKLMTLVFAAWLSCCHSSSA). 2 helical membrane passes run 131-151 (AVGMLLMIIIWIWSSIFLVVY) and 165-185 (AVCVGFLIFCTICAFRLISWI). The region spanning 224–416 (VEGYKPFIIP…GLTSPDFKFE (193 aa)) is the Peptidase S39 domain. Catalysis depends on for protease activity residues His-272, Asp-304, and Ser-373. Disordered regions lie at residues 463-490 (EEESESDDERGKVVPPAKPSNYGEGCPP) and 595-660 (TKAP…AWVR).

This sequence belongs to the peptidase S39B family.

Its subcellular location is the host membrane. In terms of biological role, precursor from which the VPg molecule is probably released at the onset of the RNA synthesis. Essential for virus replication. The polypeptide is Genome-linked protein precursor (Euphorbia pulcherrima (Poinsettia)).